A 599-amino-acid chain; its full sequence is Proline--tRNA ligase (599 aa).

This sequence belongs to the class-II aminoacyl-tRNA synthetase family. ProS type 1 subfamily. As to quaternary structure, homodimer.

The protein localises to the cytoplasm. It catalyses the reaction tRNA(Pro) + L-proline + ATP = L-prolyl-tRNA(Pro) + AMP + diphosphate. Functionally, catalyzes the attachment of proline to tRNA(Pro) in a two-step reaction: proline is first activated by ATP to form Pro-AMP and then transferred to the acceptor end of tRNA(Pro). As ProRS can inadvertently accommodate and process non-cognate amino acids such as alanine and cysteine, to avoid such errors it has two additional distinct editing activities against alanine. One activity is designated as 'pretransfer' editing and involves the tRNA(Pro)-independent hydrolysis of activated Ala-AMP. The other activity is designated 'posttransfer' editing and involves deacylation of mischarged Ala-tRNA(Pro). The misacylated Cys-tRNA(Pro) is not edited by ProRS. The chain is Proline--tRNA ligase from Bifidobacterium animalis subsp. lactis (strain AD011).